The following is a 118-amino-acid chain: Ribonuclease P protein component (118 aa).

The protein belongs to the RnpA family. As to quaternary structure, consists of a catalytic RNA component (M1 or rnpB) and a protein subunit.

The enzyme catalyses Endonucleolytic cleavage of RNA, removing 5'-extranucleotides from tRNA precursor.. RNaseP catalyzes the removal of the 5'-leader sequence from pre-tRNA to produce the mature 5'-terminus. It can also cleave other RNA substrates such as 4.5S RNA. The protein component plays an auxiliary but essential role in vivo by binding to the 5'-leader sequence and broadening the substrate specificity of the ribozyme. This is Ribonuclease P protein component from Photobacterium profundum (strain SS9).